The sequence spans 258 residues: Probable dihydroorotate dehydrogenase B (NAD(+)), electron transfer subunit (258 aa).

One can recognise an FAD-binding FR-type domain in the interval 1-90 (MRPISATIKE…RGPYGNGWEI (90 aa)). Cys210, Cys215, Cys218, and Cys228 together coordinate [2Fe-2S] cluster.

The protein belongs to the PyrK family. Heterotetramer of 2 PyrK and 2 PyrD type B subunits. [2Fe-2S] cluster is required as a cofactor. FAD serves as cofactor.

It participates in pyrimidine metabolism; UMP biosynthesis via de novo pathway; orotate from (S)-dihydroorotate (NAD(+) route): step 1/1. Responsible for channeling the electrons from the oxidation of dihydroorotate from the FMN redox center in the PyrD type B subunit to the ultimate electron acceptor NAD(+). This chain is Probable dihydroorotate dehydrogenase B (NAD(+)), electron transfer subunit, found in Methanocella arvoryzae (strain DSM 22066 / NBRC 105507 / MRE50).